Reading from the N-terminus, the 195-residue chain is Large ribosomal subunit protein bL25 (195 aa).

Belongs to the bacterial ribosomal protein bL25 family. CTC subfamily. In terms of assembly, part of the 50S ribosomal subunit; part of the 5S rRNA/L5/L18/L25 subcomplex. Contacts the 5S rRNA. Binds to the 5S rRNA independently of L5 and L18.

Functionally, this is one of the proteins that binds to the 5S RNA in the ribosome where it forms part of the central protuberance. The chain is Large ribosomal subunit protein bL25 from Chlorobium chlorochromatii (strain CaD3).